Reading from the N-terminus, the 445-residue chain is Alpha-1,3-mannosyl-glycoprotein 2-beta-N-acetylglucosaminyltransferase (445 aa).

Residues 1–6 are Cytoplasmic-facing; the sequence is MLKKQS. Residues 7-29 form a helical; Signal-anchor for type II membrane protein membrane-spanning segment; sequence AGLVLWGAILFVAWNALLLLFFW. At 30–445 the chain is on the lumenal side; sequence TRPAPGRPPS…TWEGYDPSWN (416 aa). Cys-113 and Cys-143 form a disulfide bridge. The substrate site is built by Arg-115, Asp-142, His-188, and Asp-210. Asp-211 serves as a coordination point for Mn(2+). An intrachain disulfide couples Cys-237 to Cys-303. Asp-289 (proton acceptor) is an active-site residue. Ser-320 is a binding site for substrate.

This sequence belongs to the glycosyltransferase 13 family. Interacts with MGAT4D. Interacts with BRI3 (isoforms 1 and 2); the interaction with isoform 2 is weaker than with isoform 1. Mn(2+) is required as a cofactor.

The protein resides in the golgi apparatus membrane. Its subcellular location is the cytoplasm. The protein localises to the perinuclear region. It carries out the reaction N(4)-(alpha-D-Man-(1-&gt;3)-[alpha-D-Man-(1-&gt;3)-[alpha-D-Man-(1-&gt;6)]-alpha-D-Man-(1-&gt;6)]-beta-D-Man-(1-&gt;4)-beta-D-GlcNAc-(1-&gt;4)-beta-D-GlcNAc)-L-asparaginyl-[protein] (N-glucan mannose isomer 5A1,2) + UDP-N-acetyl-alpha-D-glucosamine = N(4)-{beta-D-GlcNAc-(1-&gt;2)-alpha-D-Man-(1-&gt;3)-[alpha-D-Man-(1-&gt;3)-[alpha-D-Man-(1-&gt;6)]-alpha-D-Man-(1-&gt;6)]-beta-D-Man-(1-&gt;4)-beta-D-GlcNAc-(1-&gt;4)-beta-D-GlcNAc}-L-asparaginyl-[protein] + UDP + H(+). It functions in the pathway protein modification; protein glycosylation. Functionally, initiates complex N-linked carbohydrate formation. Essential for the conversion of high-mannose to hybrid and complex N-glycans. The polypeptide is Alpha-1,3-mannosyl-glycoprotein 2-beta-N-acetylglucosaminyltransferase (MGAT1) (Homo sapiens (Human)).